We begin with the raw amino-acid sequence, 866 residues long: Fibrinogen alpha chain (866 aa).

Positions 1–19 are cleaved as a signal peptide; that stretch reads MFSMRIVCLVLSVVGTAWT. S22 carries the phosphoserine modification. Positions 36–38 are alpha-chain polymerization, binding distal domain of another fibrin gamma chain; sequence GPR. S45 carries the phosphoserine; by FAM20C modification. At S50 the chain carries Phosphoserine. A Phosphoserine; by FAM20C modification is found at S56. Residues 68-631 are a coiled coil; the sequence is CRMKGLIDEV…GHAKSRPVRD (564 aa). Residues 262 to 460 are disordered; sequence ERPGGNEITR…SGSTTTTRRS (199 aa). The span at 270-299 shows a compositional bias: low complexity; that stretch reads TRGGSTSYGTGSETESPRNPSSAGSWNSGS. Phosphoserine occurs at positions 281, 291, and 294. O-linked (GalNAc...) threonine glycosylation occurs at T320. Residue K322 forms an Isoglutamyl lysine isopeptide (Lys-Gln) (interchain with Q-41 in alpha-2-antiplasmin) linkage. Q347 is covalently cross-linked (Isoglutamyl lysine isopeptide (Gln-Lys) (interchain with K-?)). O-linked (GalNAc...) serine glycosylation occurs at S351. Residues 354 to 391 are compositionally biased toward polar residues; the sequence is PGSTGTWNPGSSERGSAGHWTSESSVSGSTGQWHSESG. S364 is subject to Phosphoserine; by FAM20C. Q385 participates in a covalent cross-link: Isoglutamyl lysine isopeptide (Gln-Lys) (interchain with K-?). Residue T412 is modified to Phosphothreonine. Over residues 424 to 449 the composition is skewed to basic and acidic residues; sequence TRREYHTEKLVTSKGDKELRTGKEKV. Residues 450–460 are compositionally biased toward low complexity; sequence TSGSTTTTRRS. S451 is subject to Phosphoserine. S453 carries an N-linked (GlcNAc...) asparagine; in variant Caracas-2 glycan. C461 and C491 are disulfide-bonded. S501 is subject to Phosphoserine. Position 505 is a phosphothreonine (T505). At S524 the chain carries Phosphoserine; by FAM20C. Residues K527 and K558 each participate in an isoglutamyl lysine isopeptide (Lys-Gln) (interchain with Q-?) cross-link. Residues 543-638 are disordered; sequence ETESRGSESG…VRDCDDVLQT (96 aa). S560 is subject to Phosphoserine; by FAM20C. At P565 the chain carries 4-hydroxyproline; by P4HA1. Residues K575, K581, and K599 each participate in an isoglutamyl lysine isopeptide (Lys-Gln) (interchain with Q-?) cross-link. Low complexity predominate over residues 575–589; it reads KSSSYSKQFTSSTSY. Basic and acidic residues predominate over residues 594–617; sequence STFESKSYKMADEAGSEADHEGTH. The residue at position 609 (S609) is a Phosphoserine; by FAM20C. A compositionally biased stretch (basic residues) spans 618–627; it reads STKRGHAKSR. The Fibrinogen C-terminal domain occupies 623 to 864; it reads HAKSRPVRDC…AVRMKIRPLV (242 aa). A glycan (N-linked (GlcNAc...) asparagine) is linked at N686. The Ca(2+) site is built by D791, D793, W795, and E797. An intrachain disulfide couples C799 to C812.

Heterohexamer; disulfide linked. Contains 2 sets of 3 non-identical chains (alpha, beta and gamma). The 2 heterotrimers are in head to head conformation with the N-termini in a small central domain. As to quaternary structure, (Microbial infection) Interacts with Staphylococcus aureus protein Fib; this interaction inhibits fibrinogen-dependent platelet aggregation and protects the bacteria form phagocytosis. The alpha chain is normally not N-glycosylated, even though glycosylation at Asn-686 was observed when a fragment of the protein was expressed in insect cells. It is well known that heterologous expression of isolated domains can lead to adventitious protein modifications. Besides, glycosylation at Asn-686 is supported by large-scale glycoproteomics studies, but the evidence is still quite tenuous. Most likely, Asn-686 is not glycosylated in the healthy human body, or only with low efficiency. In terms of processing, O-glycosylated. Post-translationally, forms F13A-mediated cross-links between a glutamine and the epsilon-amino group of a lysine residue, forming fibronectin-fibrinogen heteropolymers. About one-third of the alpha chains in the molecules in blood were found to be phosphorylated. In terms of processing, conversion of fibrinogen to fibrin is triggered by thrombin, which cleaves fibrinopeptides A and B from alpha and beta chains, and thus exposes the N-terminal polymerization sites responsible for the formation of the soft clot. The soft clot is converted into the hard clot by factor XIIIA which catalyzes the epsilon-(gamma-glutamyl)lysine cross-linking between gamma chains (stronger) and between alpha chains (weaker) of different monomers. Post-translationally, phosphorylated by FAM20C in the extracellular medium. In terms of tissue distribution, detected in blood plasma (at protein level).

Its subcellular location is the secreted. Functionally, cleaved by the protease thrombin to yield monomers which, together with fibrinogen beta (FGB) and fibrinogen gamma (FGG), polymerize to form an insoluble fibrin matrix. Fibrin has a major function in hemostasis as one of the primary components of blood clots. In addition, functions during the early stages of wound repair to stabilize the lesion and guide cell migration during re-epithelialization. Was originally thought to be essential for platelet aggregation, based on in vitro studies using anticoagulated blood. However, subsequent studies have shown that it is not absolutely required for thrombus formation in vivo. Enhances expression of SELP in activated platelets via an ITGB3-dependent pathway. Maternal fibrinogen is essential for successful pregnancy. Fibrin deposition is also associated with infection, where it protects against IFNG-mediated hemorrhage. May also facilitate the immune response via both innate and T-cell mediated pathways. The sequence is that of Fibrinogen alpha chain (FGA) from Homo sapiens (Human).